The following is a 317-amino-acid chain: Tyrosine--tRNA ligase (317 aa).

Residue tyrosine 33 coordinates L-tyrosine. A 'HIGH' region motif is present at residues 38 to 46 (PSGKIHMGH). Residues tyrosine 155, glutamine 159, aspartate 162, and glutamine 177 each contribute to the L-tyrosine site. The 'KMSKS' region motif lies at 211–215 (KMASS). Serine 214 lines the ATP pocket.

The protein belongs to the class-I aminoacyl-tRNA synthetase family. TyrS type 3 subfamily. In terms of assembly, homodimer.

It localises to the cytoplasm. It catalyses the reaction tRNA(Tyr) + L-tyrosine + ATP = L-tyrosyl-tRNA(Tyr) + AMP + diphosphate + H(+). Its function is as follows. Catalyzes the attachment of tyrosine to tRNA(Tyr) in a two-step reaction: tyrosine is first activated by ATP to form Tyr-AMP and then transferred to the acceptor end of tRNA(Tyr). The chain is Tyrosine--tRNA ligase from Methanosarcina acetivorans (strain ATCC 35395 / DSM 2834 / JCM 12185 / C2A).